We begin with the raw amino-acid sequence, 341 residues long: Methionine import ATP-binding protein MetN 1 (341 aa).

The ABC transporter domain occupies 2 to 241; the sequence is IEFRQVSKTF…PKTTIAQNFV (240 aa). 38–45 contributes to the ATP binding site; it reads GYSGAGKS.

Belongs to the ABC transporter superfamily. Methionine importer (TC 3.A.1.24) family. In terms of assembly, the complex is composed of two ATP-binding proteins (MetN), two transmembrane proteins (MetI) and a solute-binding protein (MetQ).

The protein localises to the cell membrane. It catalyses the reaction L-methionine(out) + ATP + H2O = L-methionine(in) + ADP + phosphate + H(+). The enzyme catalyses D-methionine(out) + ATP + H2O = D-methionine(in) + ADP + phosphate + H(+). Functionally, part of the ABC transporter complex MetNIQ involved in methionine import. Responsible for energy coupling to the transport system. The protein is Methionine import ATP-binding protein MetN 1 of Staphylococcus aureus (strain MW2).